The primary structure comprises 342 residues: Methylthioribose-1-phosphate isomerase (342 aa).

Substrate contacts are provided by residues 49 to 51, Arg86, and Gln187; that span reads RGA. The active-site Proton donor is the Asp228. 238-239 provides a ligand contact to substrate; the sequence is NK.

Belongs to the eIF-2B alpha/beta/delta subunits family. MtnA subfamily.

The enzyme catalyses 5-(methylsulfanyl)-alpha-D-ribose 1-phosphate = 5-(methylsulfanyl)-D-ribulose 1-phosphate. Its pathway is amino-acid biosynthesis; L-methionine biosynthesis via salvage pathway; L-methionine from S-methyl-5-thio-alpha-D-ribose 1-phosphate: step 1/6. Its function is as follows. Catalyzes the interconversion of methylthioribose-1-phosphate (MTR-1-P) into methylthioribulose-1-phosphate (MTRu-1-P). This chain is Methylthioribose-1-phosphate isomerase, found in Citrobacter koseri (strain ATCC BAA-895 / CDC 4225-83 / SGSC4696).